Consider the following 214-residue polypeptide: LOB domain-containing protein 7 (214 aa).

Residues 12 to 113 (TACAACKHQR…TELNLTRQQI (102 aa)) form the LOB domain.

Belongs to the LOB domain-containing protein family.

The protein is LOB domain-containing protein 7 (LBD7) of Arabidopsis thaliana (Mouse-ear cress).